The following is a 200-amino-acid chain: Large ribosomal subunit protein bL25 (200 aa).

The tract at residues 1-20 (MEARELKANVRKESGKEQAR) is disordered.

The protein belongs to the bacterial ribosomal protein bL25 family. CTC subfamily. As to quaternary structure, part of the 50S ribosomal subunit; part of the 5S rRNA/L5/L18/L25 subcomplex. Contacts the 5S rRNA. Binds to the 5S rRNA independently of L5 and L18.

In terms of biological role, this is one of the proteins that binds to the 5S RNA in the ribosome where it forms part of the central protuberance. In Syntrophus aciditrophicus (strain SB), this protein is Large ribosomal subunit protein bL25.